We begin with the raw amino-acid sequence, 292 residues long: 1,4-dihydroxy-2-naphthoate octaprenyltransferase (292 aa).

A run of 6 helical transmembrane segments spans residues 35–55 (AAVW…VIGV), 101–121 (ALAG…VGAI), 137–157 (GYAG…AVLG), 166–186 (VDWV…SVLV), 220–240 (LLAV…WCVV), and 271–291 (TGLA…FGQL).

Belongs to the MenA family. Type 1 subfamily. It depends on Mg(2+) as a cofactor.

It localises to the cell membrane. It carries out the reaction an all-trans-polyprenyl diphosphate + 1,4-dihydroxy-2-naphthoate + H(+) = a 2-demethylmenaquinol + CO2 + diphosphate. Its pathway is quinol/quinone metabolism; menaquinone biosynthesis; menaquinol from 1,4-dihydroxy-2-naphthoate: step 1/2. With respect to regulation, activity is abolished by EDTA. Inhibited by Ro 48-8071, which is non-competitive with regard to DHNA and competitive with regard to the isoprenyldiphosphate substrate. Its function is as follows. Conversion of 1,4-dihydroxy-2-naphthoate (DHNA) to demethylmenaquinone (DMK). Can use a variety of allylic isoprenyl diphosphates as substrates but has a requirement for at least three isoprene units. The chain is 1,4-dihydroxy-2-naphthoate octaprenyltransferase from Mycobacterium tuberculosis (strain ATCC 25618 / H37Rv).